The following is a 184-amino-acid chain: dITP/XTP pyrophosphatase (184 aa).

Substrate is bound at residue 7 to 12 (TSNPGK). Mg(2+) contacts are provided by Glu-36 and Asp-65. Asp-65 acts as the Proton acceptor in catalysis. Residues Ser-66, 139-142 (FGFD), Lys-162, and 167-168 (HR) each bind substrate.

This sequence belongs to the HAM1 NTPase family. In terms of assembly, homodimer. The cofactor is Mg(2+).

It catalyses the reaction XTP + H2O = XMP + diphosphate + H(+). It carries out the reaction dITP + H2O = dIMP + diphosphate + H(+). The enzyme catalyses ITP + H2O = IMP + diphosphate + H(+). Its function is as follows. Pyrophosphatase that catalyzes the hydrolysis of nucleoside triphosphates to their monophosphate derivatives, with a high preference for the non-canonical purine nucleotides XTP (xanthosine triphosphate), dITP (deoxyinosine triphosphate) and ITP. Seems to function as a house-cleaning enzyme that removes non-canonical purine nucleotides from the nucleotide pool, thus preventing their incorporation into DNA/RNA and avoiding chromosomal lesions. The chain is dITP/XTP pyrophosphatase from Thermococcus kodakarensis (strain ATCC BAA-918 / JCM 12380 / KOD1) (Pyrococcus kodakaraensis (strain KOD1)).